We begin with the raw amino-acid sequence, 436 residues long: Fibrinogen gamma chain (436 aa).

The first 25 residues, 1 to 25, serve as a signal peptide directing secretion; sequence MSWSLQPPSFLLCCLLLLFSPTGLA. Asn-77 is a glycosylation site (N-linked (GlcNAc...) asparagine). The Fibrinogen C-terminal domain maps to 169–415; it reads QIHDTTGKDC…ETTMKIIPFN (247 aa). Residues Cys-178 and Cys-207 are joined by a disulfide bond. Residues Asp-343, Asp-345, and Gly-349 each coordinate Ca(2+). A disulfide bridge connects residues Cys-351 and Cys-364. Gln-423 participates in a covalent cross-link: Isoglutamyl lysine isopeptide (Gln-Lys) (interchain with K-431). Ser-430 bears the Phosphoserine mark. Lys-431 participates in a covalent cross-link: Isoglutamyl lysine isopeptide (Lys-Gln) (interchain with Q-423).

In terms of assembly, heterohexamer; disulfide linked. Contains 2 sets of 3 non-identical chains (alpha, beta and gamma). The 2 heterotrimers are in head to head conformation with the N-termini in a small central domain. In terms of processing, conversion of fibrinogen to fibrin is triggered by thrombin, which cleaves fibrinopeptides A and B from alpha and beta chains, and thus exposes the N-terminal polymerization sites responsible for the formation of the soft clot. The soft clot is converted into the hard clot by factor XIIIA which catalyzes the epsilon-(gamma-glutamyl)lysine cross-linking between gamma chains (stronger) and between alpha chains (weaker) of different monomers.

Its subcellular location is the secreted. Functionally, together with fibrinogen alpha (FGA) and fibrinogen beta (FGB), polymerizes to form an insoluble fibrin matrix. Fibrin has a major function in hemostasis as one of the primary components of blood clots. In addition, functions during the early stages of wound repair to stabilize the lesion and guide cell migration during re-epithelialization. Was originally thought to be essential for platelet aggregation, based on in vitro studies using anticoagulated blood. However, subsequent studies have shown that it is not absolutely required for thrombus formation in vivo. Enhances expression of SELP in activated platelets via an ITGB3-dependent pathway. Maternal fibrinogen is essential for successful pregnancy. Fibrin deposition is also associated with infection, where it protects against IFNG-mediated hemorrhage. May also facilitate the immune response via both innate and T-cell mediated pathways. The protein is Fibrinogen gamma chain (Fgg) of Mus musculus (Mouse).